The primary structure comprises 914 residues: Thyroid peroxidase (914 aa).

The first 31 residues, 1-31 (MRTLGAMAIMLVVMGTVIFLSFILRSRDILC), serve as a signal peptide directing secretion. Topologically, residues 32–834 (GKTMKSHVIS…TCIDSGRLPR (803 aa)) are extracellular. A glycan (N-linked (GlcNAc...) asparagine) is linked at Asn-123. Cys-136 and Cys-152 are oxidised to a cystine. Residue Asp-232 coordinates heme b. His-233 acts as the Proton acceptor in catalysis. A Ca(2+)-binding site is contributed by Asp-234. Intrachain disulfides connect Cys-253/Cys-263 and Cys-257/Cys-278. 2 N-linked (GlcNAc...) asparagine glycosylation sites follow: Asn-271 and Asn-299. Ca(2+) contacts are provided by Thr-313, Phe-315, Asp-317, and Ser-319. An N-linked (GlcNAc...) asparagine glycan is attached at Asn-334. Residues Glu-387 and His-482 each contribute to the heme b site. 7 cysteine pairs are disulfide-bonded: Cys-586-Cys-643, Cys-684-Cys-709, Cys-730-Cys-770, Cys-756-Cys-782, Cys-788-Cys-802, Cys-796-Cys-811, and Cys-813-Cys-826. An N-linked (GlcNAc...) asparagine glycan is attached at Asn-603. The Sushi domain maps to 728-783 (DKCVFPEEVDNGNFVHCEESGKLVLVYSCFHGYKLQGQEQVTCTQKGWDSEPPVCK). The 44-residue stretch at 784–827 (DVNECADLTHPPCHPSAQCKNTKGSFQCVCTDPYVLGEDEKTCI) folds into the EGF-like; calcium-binding domain. A helical transmembrane segment spans residues 835–859 (ASWVSIALGALLIGGLASLTWIVIC). Residues 860–914 (RWTHADKKATLPITERVTTQSGCRKSQGRGISPHKAAAQDTGQEPASGSRVLLCE) are Cytoplasmic-facing. A disordered region spans residues 881–909 (GCRKSQGRGISPHKAAAQDTGQEPASGSR).

This sequence belongs to the peroxidase family. XPO subfamily. Interacts with DUOX1, DUOX2 and CYBA. Ca(2+) is required as a cofactor. It depends on heme b as a cofactor. Post-translationally, heme is covalently bound through a H(2)O(2)-dependent autocatalytic process. Heme insertion is important for the delivery of protein at the cell surface. Cleaved in its N-terminal part.

The protein resides in the membrane. It catalyses the reaction 2 iodide + H2O2 + 2 H(+) = diiodine + 2 H2O. It carries out the reaction [thyroglobulin]-L-tyrosine + iodide + H2O2 + H(+) = [thyroglobulin]-3-iodo-L-tyrosine + 2 H2O. The catalysed reaction is [thyroglobulin]-3-iodo-L-tyrosine + iodide + H2O2 + H(+) = [thyroglobulin]-3,5-diiodo-L-tyrosine + 2 H2O. The enzyme catalyses 2 [thyroglobulin]-3,5-diiodo-L-tyrosine + H2O2 = [thyroglobulin]-L-thyroxine + [thyroglobulin]-dehydroalanine + 2 H2O. It catalyses the reaction [thyroglobulin]-3-iodo-L-tyrosine + [thyroglobulin]-3,5-diiodo-L-tyrosine + H2O2 = [thyroglobulin]-3,3',5-triiodo-L-thyronine + [thyroglobulin]-dehydroalanine + 2 H2O. The protein operates within hormone biosynthesis; thyroid hormone biosynthesis. In terms of biological role, iodination and coupling of the hormonogenic tyrosines in thyroglobulin to yield the thyroid hormones T(3) and T(4). This Mus musculus (Mouse) protein is Thyroid peroxidase (Tpo).